The chain runs to 155 residues: IFN signaling evasion protein OPG029 (155 aa).

Belongs to the orthopoxvirus OPG029 family. As to quaternary structure, interacts with host TANK, TBKBP1 and AZI2; these interactions prevent interferon production. Interacts with host STAT2.

Its function is as follows. Prevents establishment of cellular antiviral state by blocking virus-induced phosphorylation and activation of interferon regulatory factors 3/IRF3 and 7/IRF7, transcription factors critical for the induction of interferons alpha and beta. This blockage is produced through the inhibition of host TBK1, by binding host TBK1 adapter proteins TBKBP1 and AZI2, thereby producing a strong inhibition of the phosphorylation and activation of IRF3 and IRF7. Also acts as an inhibitor of the cellular response to type I IFN by interacting with host STAT2. Mechanistically, exerts its inhibitory effect after host ISGF3 complex (composed of STAT1, STAT2 and IRF9) binding to the interferon stimulated response element (ISRE). This is IFN signaling evasion protein OPG029 (OPG019) from Cynomys gunnisoni (Gunnison's prairie dog).